We begin with the raw amino-acid sequence, 142 residues long: Small ribosomal subunit protein bS18c (142 aa).

The interval 1–21 is disordered; sequence MDRITGPFRKSKKSFRKPLPP.

The protein belongs to the bacterial ribosomal protein bS18 family. In terms of assembly, part of the 30S ribosomal subunit.

It is found in the plastid. The polypeptide is Small ribosomal subunit protein bS18c (Cuscuta gronovii (Common dodder)).